A 155-amino-acid chain; its full sequence is SsrA-binding protein (155 aa).

The protein belongs to the SmpB family.

The protein localises to the cytoplasm. In terms of biological role, required for rescue of stalled ribosomes mediated by trans-translation. Binds to transfer-messenger RNA (tmRNA), required for stable association of tmRNA with ribosomes. tmRNA and SmpB together mimic tRNA shape, replacing the anticodon stem-loop with SmpB. tmRNA is encoded by the ssrA gene; the 2 termini fold to resemble tRNA(Ala) and it encodes a 'tag peptide', a short internal open reading frame. During trans-translation Ala-aminoacylated tmRNA acts like a tRNA, entering the A-site of stalled ribosomes, displacing the stalled mRNA. The ribosome then switches to translate the ORF on the tmRNA; the nascent peptide is terminated with the 'tag peptide' encoded by the tmRNA and targeted for degradation. The ribosome is freed to recommence translation, which seems to be the essential function of trans-translation. The sequence is that of SsrA-binding protein from Streptococcus equi subsp. equi (strain 4047).